We begin with the raw amino-acid sequence, 91 residues long: UPF0250 protein NMC1112 (91 aa).

This sequence belongs to the UPF0250 family.

This is UPF0250 protein NMC1112 from Neisseria meningitidis serogroup C / serotype 2a (strain ATCC 700532 / DSM 15464 / FAM18).